The sequence spans 296 residues: Porphobilinogen deaminase (296 aa).

S-(dipyrrolylmethanemethyl)cysteine is present on cysteine 232.

The protein belongs to the HMBS family. Monomer. The cofactor is dipyrromethane.

It carries out the reaction 4 porphobilinogen + H2O = hydroxymethylbilane + 4 NH4(+). It participates in porphyrin-containing compound metabolism; protoporphyrin-IX biosynthesis; coproporphyrinogen-III from 5-aminolevulinate: step 2/4. Functionally, tetrapolymerization of the monopyrrole PBG into the hydroxymethylbilane pre-uroporphyrinogen in several discrete steps. In Corynebacterium aurimucosum (strain ATCC 700975 / DSM 44827 / CIP 107346 / CN-1) (Corynebacterium nigricans), this protein is Porphobilinogen deaminase.